The primary structure comprises 306 residues: MTDETETPERIPNLLVILGATASGKTRLGVQLAGRLNGEIISADSRQVYCGMDIGTGKDLHEYQGIPYHLIDVAPAGHEFNLFQFQRLFLAAFTDICSRGAFPVLVGGSGMYLDCVLRGYRLTEVPQDPALREELAPLSMDELASRLVRSNPRLHNSTDLTERARLIRAIEIAEYRGEAGDDWPELTPLTIGIRWERAQLRERITKRLKERMEQGMVEEVERLHAMGTSWEQLEFYGLEYRYLARYLKGELSRNDMFQKLNSAIHDFAKKQENWFRKMQTNGIAINWVEGNSDPLAQALELLAKNR.

Residue 19 to 26 coordinates ATP; sequence GATASGKT. Substrate is bound at residue 21 to 26; it reads TASGKT. Residues 44 to 47 are interaction with substrate tRNA; that stretch reads DSRQ.

Belongs to the IPP transferase family. In terms of assembly, monomer. The cofactor is Mg(2+).

The catalysed reaction is adenosine(37) in tRNA + dimethylallyl diphosphate = N(6)-dimethylallyladenosine(37) in tRNA + diphosphate. In terms of biological role, catalyzes the transfer of a dimethylallyl group onto the adenine at position 37 in tRNAs that read codons beginning with uridine, leading to the formation of N6-(dimethylallyl)adenosine (i(6)A). This is tRNA dimethylallyltransferase 2 from Citrifermentans bemidjiense (strain ATCC BAA-1014 / DSM 16622 / JCM 12645 / Bem) (Geobacter bemidjiensis).